The sequence spans 602 residues: GTP-binding protein 2 (602 aa).

Positions 18-64 are disordered; sequence GPAMGGNLKARGAGGSSSCGGPKGKKKNGRNRGGKANNPPYLPPEAE. Positions 29–39 are enriched in gly residues; the sequence is GAGGSSSCGGP. Over residues 40-50 the composition is skewed to basic residues; the sequence is KGKKKNGRNRG. Residues 170-398 enclose the tr-type G domain; that stretch reads FLDLRVAVLG…LNILPPLTNS (229 aa). GTP contacts are provided by residues 179–186, 260–264, and 316–319; these read GNVDSGKS, DLAGH, and SKVD.

It belongs to the TRAFAC class translation factor GTPase superfamily. Classic translation factor GTPase family. GTPBP1 subfamily. In terms of tissue distribution, predominantly expressed in thymus, spleen, and testis. Expressed at lower levels in brain, heart, lung, kidney, and skeletal muscle. In testis, specifically expressed in spermatocytes and round spermatids.

The chain is GTP-binding protein 2 from Mus musculus (Mouse).